The chain runs to 169 residues: NADH dehydrogenase [ubiquinone] 1 alpha subcomplex assembly factor 2 (169 aa).

The tract at residues 116-169 (TSEELLPPPVQTQIKGHASAPYFGKEEPSVAPSSTGKTFQPGSWMPRDGKSHNQ) is disordered. Ser134 carries the post-translational modification Phosphoserine. Residues 146–156 (APSSTGKTFQP) show a composition bias toward polar residues.

It belongs to the complex I NDUFA12 subunit family. Interacts with ARMC9. In terms of tissue distribution, highly expressed in ESCC cells. Also expressed in heart, skeletal muscle, liver, and in fibroblasts.

The protein localises to the mitochondrion. In terms of biological role, acts as a molecular chaperone for mitochondrial complex I assembly. Complex I functions in the transfer of electrons from NADH to the respiratory chain. The immediate electron acceptor for the enzyme is believed to be ubiquinone. Is involved in the initial steps of cilia formation, including removal of CP110 from the mother centrioles, docking of membrane vesicles to the mother centrioles, and establishment of the transition zone. This chain is NADH dehydrogenase [ubiquinone] 1 alpha subcomplex assembly factor 2 (NDUFAF2), found in Homo sapiens (Human).